A 140-amino-acid polypeptide reads, in one-letter code: Probable disulfide formation protein C 2 (140 aa).

Residues 6–25 (KYHIAIAWTIATSAMLISLI) form a helical membrane-spanning segment. C35 and C38 form a disulfide bridge. 2 helical membrane passes run 40–59 (YQRMAMYPLVLILGIGMYRK) and 66–83 (YAFPFACIGLIISVYQIT). Residues C95 and C101 are joined by a disulfide bond. A helical transmembrane segment spans residues 110–134 (GFISIPMLSFVGFLAIIILLYINQI).

Belongs to the DsbB family. BdbC subfamily.

The protein localises to the cell membrane. Its function is as follows. Required for disulfide bond formation in some proteins. This Bacillus anthracis protein is Probable disulfide formation protein C 2 (bdbC2).